The sequence spans 237 residues: Protein FEV (237 aa).

Positions 47–127 (IQLWQFLLEL…HGKRYAYRFD (81 aa)) form a DNA-binding region, ETS. Positions 129 to 237 (QGLAQACQPP…AASHLGGHYH (109 aa)) are may mediate active transcriptional repression.

This sequence belongs to the ETS family. Expressed in central serotonergic neurons.

The protein resides in the nucleus. Its function is as follows. Functions as a transcriptional regulator. May function as a transcriptional repressor. Functions in the differentiation and the maintenance of the central serotonergic neurons. May play a role in cell growth. The chain is Protein FEV (Fev) from Mus musculus (Mouse).